A 308-amino-acid polypeptide reads, in one-letter code: Barttin (308 aa).

Over 1-5 the chain is Cytoplasmic; sequence MADEK. Residues 1 to 72 form a regulates channel membrane trafficking and anion conductance region; sequence MADEKTFRIG…VPADSDFQGM (72 aa). A helical transmembrane segment spans residues 6–26; the sequence is TFRIGFIVLGLFLLSLGTFLM. Over 27–32 the chain is Extracellular; that stretch reads SHDRPQ. The helical transmembrane segment at 33 to 53 threads the bilayer; it reads VYGTFYAMGSIMVIGGVLWSM. 2 S-palmitoyl cysteine lipidation sites follow: cysteine 54 and cysteine 56. The Cytoplasmic portion of the chain corresponds to 54 to 308; sequence CQCYPKITFV…ELGFEPDVQG (255 aa). Phosphoserine is present on residues serine 79 and serine 107. Disordered regions lie at residues 127 to 149 and 162 to 308; these read PLLA…HSAQ and LDEK…DVQG. Over residues 162-171 the composition is skewed to basic and acidic residues; the sequence is LDEKEGEKSR. The span at 172-183 shows a compositional bias: polar residues; sequence SQSSPPACSQGS. The span at 274–283 shows a compositional bias: acidic residues; that stretch reads EEPEQEEEDL. Serine 290 carries the post-translational modification Phosphoserine.

In terms of assembly, interacts with CLCNK channels. Forms heteromers with CLCNKA in the thin ascending limb of Henle and with CLCNKB in the thick ascending limb and more distal segments. In terms of processing, palmitoylation is necessary for activation of plasma membrane-inserted CLC-K/barttin channels. As to expression, expressed along the distal nephron.

It localises to the basolateral cell membrane. Functionally, regulatory subunit of anion-selective CLCNKA:BSND and CLCNKB:BSND heteromeric channels involved in basolateral chloride conductance along the nephron to achieve urine concentration and maintain systemic acid-base homeostasis, and in the stria vascularis of the inner ear to establish the endocochlear potential necessary for normal hearing. Most likely acts as a chaperone that allosterically regulates proper sorting of CLCNKA:BSND and CLCNKB:BSND channels at the basolateral plasma membrane domain and functional switch to ion conducting state. Mediates constitutive opening of channel common gates. The sequence is that of Barttin from Rattus norvegicus (Rat).